We begin with the raw amino-acid sequence, 137 residues long: Large-conductance mechanosensitive channel (137 aa).

Helical transmembrane passes span 15 to 35, 38 to 58, and 80 to 100; these read VDLA…NSIV, IIMP…MFIQ, and GNFV…FLVV.

The protein belongs to the MscL family. In terms of assembly, homopentamer.

The protein resides in the cell inner membrane. Its function is as follows. Channel that opens in response to stretch forces in the membrane lipid bilayer. May participate in the regulation of osmotic pressure changes within the cell. This chain is Large-conductance mechanosensitive channel, found in Brucella anthropi (strain ATCC 49188 / DSM 6882 / CCUG 24695 / JCM 21032 / LMG 3331 / NBRC 15819 / NCTC 12168 / Alc 37) (Ochrobactrum anthropi).